The following is a 323-amino-acid chain: Dolichyl-phosphate beta-glucosyltransferase ALG5A (323 aa).

Topologically, residues 1–5 (MKFWR) are lumenal. The chain crosses the membrane as a helical span at residues 6 to 26 (FVQILFFLGVAAVGLVVAVMI). The Cytoplasmic portion of the chain corresponds to 27–323 (ANADDTTLFD…GAWKIRDRRH (297 aa)).

The protein belongs to the glycosyltransferase 2 family.

The protein resides in the endoplasmic reticulum membrane. The catalysed reaction is a di-trans,poly-cis-dolichyl phosphate + UDP-alpha-D-glucose = a di-trans,poly-cis-dolichyl beta-D-glucosyl phosphate + UDP. It participates in protein modification; protein glycosylation. In terms of biological role, dolichyl-phosphate beta-glucosyltransferase involved in the glycosylation of glycoproteins through the synthesis of dolichyl beta-D-glucosyl phosphate which serves as a sugar donor for transfer of three glucose residues to the Man-9-GlcNAc-2-PP-dolichol precursor to N-glycans. This is Dolichyl-phosphate beta-glucosyltransferase ALG5A from Trichomonas vaginalis (strain ATCC PRA-98 / G3).